Here is a 509-residue protein sequence, read N- to C-terminus: MAAIGVHLGCTCACVAVYKDGRADVVANDAGDRVTPAVVGFLEKEVIVGLAAKQSRVRNAANTIVKVKQILGRSYADPHAQKHISENKCIVVEKGGKPKYEIDTGEIQKLVSSEDVAKLIFSKMKETAQSALGSDVNDVVITVPFDFGESQKKALGEAALAAGFNILRMIHEPSAALLAYGIGQESPTGKSNVLVYKLGGTSLSVTMIEVNSGIYRVLATSTYDGIGGVCFTEALAQHLASEFQRTYKQDIRGNARAMMKLMNSADVAKHALSTLGSANCFVDSLYDGIDFDCSVSRARFELICSSLFNQCIDPIEKLLEQVGCKATDVNQVVLCGGSARIPKLQLLIKDLFPEVEMLSSIPPDEVIPVGAAIQAGILLGKENLSTDLDTITIECLASDILVKETDESGNNKFTVLLPSGTPLPARRQHVLQAPGNISSVCLELYESVGKSTVSEECKFAQIVLKDLQKKASGVHDILTVLTMKRDGSLHITCTDKDSGKSEMITVETS.

This sequence belongs to the heat shock protein 70 family. In terms of assembly, component of ribosome-associated complex (RAC).

The protein resides in the cytoplasm. It localises to the cytosol. Functionally, component of the ribosome-associated complex (RAC), a complex involved in folding or maintaining nascent polypeptides in a folding-competent state. In Xenopus laevis (African clawed frog), this protein is Heat shock 70 kDa protein 14-A (hspa14-a).